Reading from the N-terminus, the 345-residue chain is MRRSKYERPAHLIGNAERPRLTTSAMIASIAGADQPTRPAPFGHALSALAEKDDRVVGLSADLAKYTDLHVFRAAHPDRFYQMGMAEQLLMMSAAGMAREGLQPWVTTYAVFASRRAYDFICLAIAEEMLDVKVVCALPGLTTGYGPSHQATEDIAMFRGMPNLTIIDPCDASEIEQAVPAIAAHEGPVYMRLLRGNVPLVLEEYGYRFELGKAKLLRDGRDTLIISSGLMTMRALEAAEELRKNGIDAGVLHVPTIKPLDEATILAECARQGRLVVVAENHTVIGGLGEAVAATLMRSAVRPAAFRQIGLPDAFLEAGALPTLHDMYGISTTKIVAQIKEWLDE.

Belongs to the transketolase family. Thiamine diphosphate is required as a cofactor.

This is an uncharacterized protein from Sinorhizobium fredii (strain NBRC 101917 / NGR234).